The sequence spans 201 residues: Small ribosomal subunit protein uS4 (201 aa).

The S4 RNA-binding domain maps to 91–151 (SRLDNVVYRA…EKSQKMNWFE (61 aa)).

The protein belongs to the universal ribosomal protein uS4 family. Part of the 30S ribosomal subunit. Contacts protein S5. The interaction surface between S4 and S5 is involved in control of translational fidelity.

Its function is as follows. One of the primary rRNA binding proteins, it binds directly to 16S rRNA where it nucleates assembly of the body of the 30S subunit. Functionally, with S5 and S12 plays an important role in translational accuracy. This Corynebacterium glutamicum (strain ATCC 13032 / DSM 20300 / JCM 1318 / BCRC 11384 / CCUG 27702 / LMG 3730 / NBRC 12168 / NCIMB 10025 / NRRL B-2784 / 534) protein is Small ribosomal subunit protein uS4.